A 350-amino-acid polypeptide reads, in one-letter code: S-adenosylmethionine:tRNA ribosyltransferase-isomerase (350 aa).

The protein belongs to the QueA family. Monomer.

Its subcellular location is the cytoplasm. The catalysed reaction is 7-aminomethyl-7-carbaguanosine(34) in tRNA + S-adenosyl-L-methionine = epoxyqueuosine(34) in tRNA + adenine + L-methionine + 2 H(+). It participates in tRNA modification; tRNA-queuosine biosynthesis. Its function is as follows. Transfers and isomerizes the ribose moiety from AdoMet to the 7-aminomethyl group of 7-deazaguanine (preQ1-tRNA) to give epoxyqueuosine (oQ-tRNA). In Aliivibrio fischeri (strain MJ11) (Vibrio fischeri), this protein is S-adenosylmethionine:tRNA ribosyltransferase-isomerase.